A 975-amino-acid polypeptide reads, in one-letter code: MKLEHPDRLMNRTPLSLAALETHDAFAERHIGPDAASQQAMLDTLGFASRAALIDAVIPASIRRAETLPLGPFAQPKSEAEALAALRALADKNQVFRSYIGQGYHDTHTPAVILRNVLENPAWYTAYTPYQPEISQGRLEALLNFQQMVADLTGLAISNASLLDEATAAAEAMTLLQRTGKPASNVFYVADDVLPQTLEVIRTRALPVGIEVKTGPAADAAQANAFGVLLQYPGVNGDVRDYRALTEAIHAAGGHVVVAADLLALTVLTPPGEWGADVAVGNTQRFGVPMGFGGPHAAYLAVRDEFKRQMPGRLVGVTVDAQGKPALRLALQTREQHIRREKATSNVCTAQALLAIMASMYAVYHGPHGLKTIALRVNRIAALFAAGVKQLGFAPINDTFFDTLTIDTGARTAQVHEFAKARRINLRRVSDTQVGVSFDETTTRDDLAALLAVFAQAAGGTAPSVDALDAGLAGVAALPAGLERTSAYLTHHVFNRHHSETEMLRYLRSLSDKDLALDRSMIPLGSCTMKLNATSEMLPVTWPEFGRIHPFAPAEQTVGYREMIDQLEQMLVAATGYAAVSLQPNAGSQGEYAGLLIIHAYHASRGEAHRDVCLIPASAHGTNPASAHMAGMKVVVVACDAQGNVDIADLKAKAEQHANDLAAIMITYPSTHGVFEQNVREICEIVHAHGGQVYVDGANMNAMVGLTAPGQFGGDVSHLNLHKTFCIPHGGGGPGVGPVAVGPHLAKFLPNQRSTGYTREENGIGAVSAAPYGSASILPISWMYIAMMGAKNLTAATETAILNANYIAKRLAPHYPVLYSGPGGLVAHECILDLRPIKETSGISVDDVAKRLMDYGFHAPTMSFPVPGTLMVEPTESESQEELDRFIAAMIAIREEIRAVEEGRADREDNPLRHAPHTAAVVTANEWPHAYSREQAAYPVASLGTNKYWPPVGRADNAYGDRNLFCSCVPMSDYA.

K723 is subject to N6-(pyridoxal phosphate)lysine.

It belongs to the GcvP family. As to quaternary structure, the glycine cleavage system is composed of four proteins: P, T, L and H. Requires pyridoxal 5'-phosphate as cofactor.

It carries out the reaction N(6)-[(R)-lipoyl]-L-lysyl-[glycine-cleavage complex H protein] + glycine + H(+) = N(6)-[(R)-S(8)-aminomethyldihydrolipoyl]-L-lysyl-[glycine-cleavage complex H protein] + CO2. Functionally, the glycine cleavage system catalyzes the degradation of glycine. The P protein binds the alpha-amino group of glycine through its pyridoxal phosphate cofactor; CO(2) is released and the remaining methylamine moiety is then transferred to the lipoamide cofactor of the H protein. The protein is Glycine dehydrogenase (decarboxylating) of Burkholderia ambifaria (strain ATCC BAA-244 / DSM 16087 / CCUG 44356 / LMG 19182 / AMMD) (Burkholderia cepacia (strain AMMD)).